The following is a 160-amino-acid chain: 6,7-dimethyl-8-ribityllumazine synthase (160 aa).

Residues tryptophan 27, 59–61 (AIE), and 81–83 (VVI) contribute to the 5-amino-6-(D-ribitylamino)uracil site. Residue 86 to 87 (DT) coordinates (2S)-2-hydroxy-3-oxobutyl phosphate. Catalysis depends on histidine 89, which acts as the Proton donor. Residue asparagine 114 coordinates 5-amino-6-(D-ribitylamino)uracil. Arginine 128 lines the (2S)-2-hydroxy-3-oxobutyl phosphate pocket.

It belongs to the DMRL synthase family. As to quaternary structure, homopentamer.

It catalyses the reaction (2S)-2-hydroxy-3-oxobutyl phosphate + 5-amino-6-(D-ribitylamino)uracil = 6,7-dimethyl-8-(1-D-ribityl)lumazine + phosphate + 2 H2O + H(+). It participates in cofactor biosynthesis; riboflavin biosynthesis; riboflavin from 2-hydroxy-3-oxobutyl phosphate and 5-amino-6-(D-ribitylamino)uracil: step 1/2. Functionally, catalyzes the formation of 6,7-dimethyl-8-ribityllumazine by condensation of 5-amino-6-(D-ribitylamino)uracil with 3,4-dihydroxy-2-butanone 4-phosphate. This is the penultimate step in the biosynthesis of riboflavin. In Mycobacterium leprae (strain Br4923), this protein is 6,7-dimethyl-8-ribityllumazine synthase.